The primary structure comprises 493 residues: Galactose-1-phosphate uridylyltransferase (493 aa).

It belongs to the galactose-1-phosphate uridylyltransferase type 2 family.

The protein localises to the cytoplasm. It catalyses the reaction alpha-D-galactose 1-phosphate + UDP-alpha-D-glucose = alpha-D-glucose 1-phosphate + UDP-alpha-D-galactose. It functions in the pathway carbohydrate metabolism; galactose metabolism. The polypeptide is Galactose-1-phosphate uridylyltransferase (Lactococcus lactis subsp. cremoris (strain SK11)).